A 673-amino-acid chain; its full sequence is Putative transcription factor tau subunit sfc9 (673 aa).

In terms of assembly, may be a component of the TFIIIC complex.

The protein resides in the nucleus. This Schizosaccharomyces pombe (strain 972 / ATCC 24843) (Fission yeast) protein is Putative transcription factor tau subunit sfc9.